The following is a 1025-amino-acid chain: Collagen alpha-1(VI) chain (1025 aa).

The N-terminal stretch at 1–19 (MRLAHALLPLLLQACWVAT) is a signal peptide. The interval 20-255 (QDIQGSKAIA…CCSFECQAAR (236 aa)) is N-terminal globular domain. The region spanning 36-234 (DLFFVLDTSE…EVISQTIDTI (199 aa)) is the VWFA 1 domain. Asparagine 211 carries N-linked (GlcNAc...) asparagine glycosylation. Residues 252–588 (QAARGPPGPR…QGPPGHVGPP (337 aa)) form a disordered region. Residues 256-591 (GPPGPRGDPG…PGHVGPPGPD (336 aa)) are triple-helical region. The Cell attachment site signature appears at 261–263 (RGD). Composition is skewed to basic and acidic residues over residues 267–284 (EGER…EAGD) and 300–333 (KGEK…DGMK). 2 short sequence motifs (cell attachment site) span residues 441–443 (RGD) and 477–479 (RGD). N-linked (GlcNAc...) asparagine glycans are attached at residues asparagine 515 and asparagine 536. Residues 549-559 (GEVGDPGEDNN) show a composition bias toward acidic residues. Over residues 578–588 (PQGPPGHVGPP) the composition is skewed to pro residues. Residues 592–1025 (ECEILDIIMK…QTVSRKVALG (434 aa)) form a C-terminal globular domain region. 2 consecutive VWFA domains span residues 614 to 802 (DILF…LKNI) and 826 to 1018 (DITI…YQTV). Residues asparagine 801 and asparagine 893 are each glycosylated (N-linked (GlcNAc...) asparagine).

The protein belongs to the type VI collagen family. Trimers composed of three different chains: alpha-1(VI), alpha-2(VI), and alpha-3(VI) or alpha-4(VI) or alpha-5(VI) or alpha-6(VI). In terms of processing, prolines at the third position of the tripeptide repeating unit (G-X-Y) are hydroxylated in some or all of the chains.

Its subcellular location is the secreted. The protein resides in the extracellular space. It localises to the extracellular matrix. Its function is as follows. Collagen VI acts as a cell-binding protein. This Mus musculus (Mouse) protein is Collagen alpha-1(VI) chain (Col6a1).